We begin with the raw amino-acid sequence, 83 residues long: Putative beta-neurotoxin RjAa15f (83 aa).

A signal peptide spans 1-18 (MKILIFIIASFMLIGVEC). One can recognise an LCN-type CS-alpha/beta domain in the interval 19–82 (KEGYPMGRNG…VWDSSNNKCV (64 aa)). Cystine bridges form between Cys29-Cys81, Cys33-Cys55, Cys40-Cys62, and Cys44-Cys64.

Belongs to the long (4 C-C) scorpion toxin superfamily. Sodium channel inhibitor family. Beta subfamily. Expressed by the venom gland.

The protein localises to the secreted. In terms of biological role, beta toxins bind voltage-independently at site-4 of sodium channels (Nav) and shift the voltage of activation toward more negative potentials thereby affecting sodium channel activation and promoting spontaneous and repetitive firing. The chain is Putative beta-neurotoxin RjAa15f from Rhopalurus junceus (Caribbean blue scorpion).